Reading from the N-terminus, the 584-residue chain is Kelch domain-containing protein 4 (584 aa).

Positions 1 to 10 (MGKKGKKEKK) are enriched in basic residues. Disordered regions lie at residues 1–33 (MGKKGKKEKKGRGAEKTAAKMEKKVSKRSRKEE) and 50–69 (KTQVTETPCPPPSPRLNASL). The segment covering 11-24 (GRGAEKTAAKMEKK) has biased composition (basic and acidic residues). Kelch repeat units lie at residues 77–129 (ELIL…VVPQ), 133–187 (QLWV…AWKR), 188–238 (QLIL…LMAV), 243–289 (SIAI…INPS), and 308–361 (QILV…RRGK). Disordered regions lie at residues 348-381 (KGPKSEKKKRRRGKAEDPEGTTEQETGGSSAPEP), 405-433 (SGLGVQPSPKADDSASEASSTGQEPCPRS), and 482-533 (PKSQ…EQFE). A Phosphoserine modification is found at serine 418. A Kelch 6 repeat occupies 443-494 (LLYVYGGMFEAGDRQVTLSDLYCLDLHKMEEWKTLVEMDPKSQEWLEESDSE). The segment covering 487-519 (WLEESDSEEDSSSDEESEDGEDKDQEDSAEEGA) has biased composition (acidic residues). Positions 520–533 (DPQHPEVARGEQFE) are enriched in basic and acidic residues.

The sequence is that of Kelch domain-containing protein 4 (Klhdc4) from Mus musculus (Mouse).